Reading from the N-terminus, the 368-residue chain is p21-activated protein kinase-interacting protein 1-like (368 aa).

WD repeat units follow at residues 45 to 82, 85 to 123, 126 to 165, 207 to 245, and 248 to 289; these read AHTASLNAVSSSNQFIATGSKDETIQLYDMCKKTEHGA, HHDGTISCLEFYGTSHLLSGGQDGLICVWSTKKWECLKT, AHKGQVTSLSVHPSGKLALSVGTDKTLRTWNLIEGRSAFI, AFTKRISCLKFLKNSLLAVGGDDESVRIYDVTSQKCVCE, and AHEN…IESP.

The protein localises to the nucleus. It is found in the nucleolus. In terms of biological role, negatively regulates the PAK1 kinase. PAK1 is a member of the PAK kinase family, which has been shown to play a positive role in the regulation of signaling pathways involving MAPK8 and RELA. PAK1 exists as an inactive homodimer, which is activated by binding of small GTPases such as CDC42 to an N-terminal regulatory domain. PAK1IP1 also binds to the N-terminus of PAK1, and inhibits the specific activation of PAK1 by CDC42. May be involved in ribosomal large subunit assembly. The sequence is that of p21-activated protein kinase-interacting protein 1-like (pak1ip1) from Danio rerio (Zebrafish).